The chain runs to 459 residues: Protoheme IX farnesyltransferase (459 aa).

Positions 1–184 are unknown; sequence MSRNTATQFV…AYVQLMKPRL (184 aa). The next 12 membrane-spanning stretches (helical) occupy residues 9-29, 66-86, 93-113, 123-143, 184-204, 211-231, 262-282, 284-304, 325-345, 382-402, 403-423, and 438-458; these read FVAV…LGAT, AAAL…RTGA, AVTL…YTAM, VHLT…AWTL, LMWL…SQLG, AATV…SGTF, LAFG…VNLL, AVLG…VLKP, WVAV…VIFL, HIVY…ELTG, LGPL…YFAI, and FHAS…DTMV. Positions 185–459 are protoheme IX prenyltransferase; sequence MWLLCLVAGA…VAVVLDTMVV (275 aa).

It in the C-terminal section; belongs to the UbiA prenyltransferase family. Protoheme IX farnesyltransferase subfamily.

It is found in the cell membrane. It catalyses the reaction heme b + (2E,6E)-farnesyl diphosphate + H2O = Fe(II)-heme o + diphosphate. The protein operates within porphyrin-containing compound metabolism; heme O biosynthesis; heme O from protoheme: step 1/1. Functionally, converts heme B (protoheme IX) to heme O by substitution of the vinyl group on carbon 2 of heme B porphyrin ring with a hydroxyethyl farnesyl side group. This Halobacterium salinarum (strain ATCC 29341 / DSM 671 / R1) protein is Protoheme IX farnesyltransferase (ctaB).